Reading from the N-terminus, the 1104-residue chain is Mitogen-activated protein kinase kinase kinase 9 (1104 aa).

The span at A12 to E22 shows a compositional bias: low complexity. The segment at A12 to E47 is disordered. Residues A29–A39 are compositionally biased toward acidic residues. One can recognise an SH3 domain in the interval A52–A116. The Protein kinase domain maps to L144–F412. ATP contacts are provided by residues I150–V158 and K171. The active-site Proton acceptor is D268. Phosphothreonine; by autocatalysis occurs at positions 304 and 305. S308 carries the post-translational modification Phosphoserine; by autocatalysis. T312 carries the phosphothreonine; by autocatalysis modification. Leucine-zipper stretches follow at residues I430–L451 and L465–I486. Disordered regions lie at residues A532–H636, M675–G742, E781–E819, and R890–S1038. S533 is subject to Phosphoserine. 2 stretches are compositionally biased toward polar residues: residues P566–R575 and P723–L739. The segment covering P785 to L797 has biased composition (basic and acidic residues). The segment covering N893 to S910 has biased composition (polar residues). The segment covering S929–G944 has biased composition (low complexity). Residues H1014 to S1038 show a composition bias toward polar residues.

This sequence belongs to the protein kinase superfamily. STE Ser/Thr protein kinase family. MAP kinase kinase kinase subfamily. As to quaternary structure, homodimer. It depends on Mg(2+) as a cofactor. Post-translationally, autophosphorylation on serine and threonine residues within the activation loop plays a role in enzyme activation. Thr-312 is likely to be the main autophosphorylation site. Autophosphorylation also occurs on Thr-304 and Ser-308. As to expression, expressed in epithelial tumor cell lines of colonic, breast and esophageal origin.

It catalyses the reaction L-seryl-[protein] + ATP = O-phospho-L-seryl-[protein] + ADP + H(+). It carries out the reaction L-threonyl-[protein] + ATP = O-phospho-L-threonyl-[protein] + ADP + H(+). Homodimerization via the leucine zipper domains is required for autophosphorylation of multiple sites in the activation loop and subsequent activation. Autophosphorylation at Thr-312 is the key step in activation of MAP3K9/MLK1 and is required for full phosphorylation. Autophosphorylation at Thr-304 and Ser-308 have been shown to be of secondary importance in the activation of MAP3K9/MLK1. CEP-1347 and many indolocarbazole analogs have been shown to act as inhibitors of MAP3K9/MLK1 activity. Serine/threonine kinase which acts as an essential component of the MAP kinase signal transduction pathway. Plays an important role in the cascades of cellular responses evoked by changes in the environment. Once activated, acts as an upstream activator of the MKK/JNK signal transduction cascade through the phosphorylation of MAP2K4/MKK4 and MAP2K7/MKK7 which in turn activate the JNKs. The MKK/JNK signaling pathway regulates stress response via activator protein-1 (JUN) and GATA4 transcription factors. Also plays a role in mitochondrial death signaling pathway, including the release cytochrome c, leading to apoptosis. This is Mitogen-activated protein kinase kinase kinase 9 (MAP3K9) from Homo sapiens (Human).